A 374-amino-acid polypeptide reads, in one-letter code: MAQPMLIDLEELVERLDRIGVRLCLPSKRQQIEQLEHEAADPDLWQDPQRAQSLLRRLSQLRDLVQEWETLSQQARDLLELRALASDDLELAGQVEQEATELAERVRQLELRLLLTGQYDGHDAILAVHAGTGGVDAQDWAEMLLRMYLRWAQRAGFAAEVVDLLEGEEAGIKSATVEVRGPYAYGYLKGEAGTHRLVRLSPFDAAHRRHTSFALVEVLPLVEEDDDVEIREEDIRIDTFRASGHGGQHVNKTESAVRITHLPTGIVVTCQNERSQIQNRETAMKILKARLLELKIRQRQEEQARLKGKPVVTGWGNRIRSYVLHPYTMVTDHRTEVSTPNIQAVLEGEIDPFIEAYLHQQAAEGEETAAASDR.

The residue at position 248 (Gln-248) is an N5-methylglutamine.

The protein belongs to the prokaryotic/mitochondrial release factor family. In terms of processing, methylated by PrmC. Methylation increases the termination efficiency of RF2.

It is found in the cytoplasm. Peptide chain release factor 2 directs the termination of translation in response to the peptide chain termination codons UGA and UAA. The chain is Peptide chain release factor 2 from Thermomicrobium roseum (strain ATCC 27502 / DSM 5159 / P-2).